The following is a 473-amino-acid chain: Zinc finger and SCAN domain-containing protein 21 (473 aa).

Lys27 is covalently cross-linked (Glycyl lysine isopeptide (Lys-Gly) (interchain with G-Cter in SUMO2)). An SCAN box domain is found at 45 to 127 (RQRFRQFGYH…TLLEDLEREL (83 aa)). The tract at residues 127–171 (LDEPGHQVSTPPNEQKPVWEKISSSGTAKESPSSMQPQPLETSHN) is disordered. The span at 148–171 (ISSSGTAKESPSSMQPQPLETSHN) shows a compositional bias: polar residues. Glycyl lysine isopeptide (Lys-Gly) (interchain with G-Cter in SUMO2) cross-links involve residues Lys221 and Lys232. The disordered stretch occupies residues 244 to 272 (LENEKGTKPPLQEAGSKKGRESVPTKPTP). Residues 258-272 (GSKKGRESVPTKPTP) are compositionally biased toward basic and acidic residues. 7 C2H2-type zinc fingers span residues 277-299 (YICAECGKAFSNSSNLTKHRRTH), 305-327 (YVCTKCGKAFSHSSNLTLHYRTH), 333-354 (YDCKCGKAFGQSSDLLKHQRMH), 360-382 (YQCKDCGKAFSGKGSLIRHYRIH), 388-410 (YQCNECGKSFSQHAGLSSHQRLH), 416-438 (YKCKECGKAFNHSSNFNKHHRIH), and 444-466 (YWCHHCGKTFCSKSNLSKHQRVH). Lys349 participates in a covalent cross-link: Glycyl lysine isopeptide (Lys-Gly) (interchain with G-Cter in SUMO2).

Belongs to the krueppel C2H2-type zinc-finger protein family.

It localises to the nucleus. Its function is as follows. Strong transcriptional activator. Plays an important role in spermatogenesis; essential for the progression of meiotic prophase I in spermatocytes. In Gorilla gorilla gorilla (Western lowland gorilla), this protein is Zinc finger and SCAN domain-containing protein 21 (ZSCAN21).